The chain runs to 539 residues: MIO-dependent tyrosine 2,3-aminomutase (539 aa).

The active-site Proton donor/acceptor is Tyr63. Residue His93 participates in substrate binding. The 5-imidazolinone (Ala-Gly) cross-link spans 152–154 (ASG). At Ser153 the chain carries 2,3-didehydroalanine (Ser). Residues Asn205 and Arg311 each contribute to the substrate site.

It belongs to the TAL/TAM family. As to quaternary structure, homotetramer; dimer of dimers. In terms of processing, contains an active site 4-methylidene-imidazol-5-one (MIO), which is formed autocatalytically by cyclization and dehydration of residues Ala-Ser-Gly.

It carries out the reaction L-tyrosine = 3-amino-3-(4-hydroxyphenyl)propanoate. The catalysed reaction is L-tyrosine = (E)-4-coumarate + NH4(+). Functionally, involved in the biosynthesis of the enediyne antitumor antibiotic C-1027. Catalyzes the MIO-dependent deamination of L-tyrosine generating the corresponding alpha,beta-unsaturated acid, (S)-beta-tyrosine. The protein is MIO-dependent tyrosine 2,3-aminomutase of Streptomyces globisporus.